We begin with the raw amino-acid sequence, 134 residues long: ATP synthase epsilon chain (134 aa).

Positions 94–104 (AKLAKSRAESH) are enriched in basic and acidic residues. Residues 94–115 (AKLAKSRAESHLEDDDDNTDIN) are disordered.

This sequence belongs to the ATPase epsilon chain family. F-type ATPases have 2 components, CF(1) - the catalytic core - and CF(0) - the membrane proton channel. CF(1) has five subunits: alpha(3), beta(3), gamma(1), delta(1), epsilon(1). CF(0) has three main subunits: a, b and c.

The protein resides in the cell membrane. Its function is as follows. Produces ATP from ADP in the presence of a proton gradient across the membrane. The protein is ATP synthase epsilon chain of Staphylococcus epidermidis (strain ATCC 12228 / FDA PCI 1200).